The primary structure comprises 695 residues: Elongation factor G 2 (695 aa).

Residues 5–280 (SLYRNIGIFA…AVVDYLPSPT (276 aa)) enclose the tr-type G domain. Residues 14 to 21 (AHVDAGKT), 78 to 82 (DTPGH), and 132 to 135 (NKLD) each bind GTP.

Belongs to the TRAFAC class translation factor GTPase superfamily. Classic translation factor GTPase family. EF-G/EF-2 subfamily.

The protein localises to the cytoplasm. In terms of biological role, catalyzes the GTP-dependent ribosomal translocation step during translation elongation. During this step, the ribosome changes from the pre-translocational (PRE) to the post-translocational (POST) state as the newly formed A-site-bound peptidyl-tRNA and P-site-bound deacylated tRNA move to the P and E sites, respectively. Catalyzes the coordinated movement of the two tRNA molecules, the mRNA and conformational changes in the ribosome. The chain is Elongation factor G 2 from Vibrio cholerae serotype O1 (strain ATCC 39315 / El Tor Inaba N16961).